We begin with the raw amino-acid sequence, 73 residues long: uncharacterized protein (73 aa).

The first 23 residues, 1-23 (MLHLIKMVSKIVLLITLVFIVSA), serve as a signal peptide directing secretion.

This is an uncharacterized protein from Acheta domesticus (House cricket).